The sequence spans 402 residues: Multidrug resistance protein MdtH (402 aa).

At 1-12 (MSRVSQARNLGK) the chain is on the cytoplasmic side. Residues 13 to 33 (YFLLIDNMLVVLGFFVVFPLI) form a helical membrane-spanning segment. Over 34–98 (SIRFVDQMGW…GFATMGIAHE (65 aa)) the chain is Periplasmic. The chain crosses the membrane as a helical span at residues 99–116 (PWLLWFSCLLSGLGGTLF). The Cytoplasmic portion of the chain corresponds to 117–138 (DPPRSALVVKLIRPQQRGRFFS). The helical transmembrane segment at 139–159 (LLMMQDSAGAVIGALLGSWLL) threads the bilayer. Over 160–164 (QYDFR) the chain is Periplasmic. The helical transmembrane segment at 165–185 (LVCATGAVLFVLCAAFNAWLL) threads the bilayer. Over 186–213 (PAWKLSTVRTPVREGMTRVMRDKRFVTY) the chain is Cytoplasmic. Residues 214–234 (VLTLAGYYMLAVQVMLMLPIM) traverse the membrane as a helical segment. Topologically, residues 235–243 (VNDVAGAPS) are periplasmic. A helical membrane pass occupies residues 244–264 (AVKWMYAIEACLSLTLLYPIA). Residues 265-276 (RWSEKHFRLEHR) are Cytoplasmic-facing. Residues 277–297 (LMAGLLIMSLSMMPVGMVSGL) traverse the membrane as a helical segment. Residues 298-299 (QQ) lie on the Periplasmic side of the membrane. Residues 300 to 320 (LFTLICLFYIGSIIAEPARET) traverse the membrane as a helical segment. Topologically, residues 321-339 (LSASLADARARGSYMGFSR) are cytoplasmic. A helical transmembrane segment spans residues 340–360 (LGLAIGGAIGYIGGGWLFDLG). At 361–367 (KSVHQPE) the chain is on the periplasmic side. The chain crosses the membrane as a helical span at residues 368–388 (LPWMMLGIIGIFTFLALGWQF). Residues 389–402 (SQKRAARRLLERDA) are Cytoplasmic-facing.

It belongs to the major facilitator superfamily. DHA1 family. MdtH (TC 2.A.1.2.21) subfamily.

Its subcellular location is the cell inner membrane. In terms of biological role, confers resistance to norfloxacin and enoxacin. The protein is Multidrug resistance protein MdtH of Escherichia coli O157:H7.